We begin with the raw amino-acid sequence, 717 residues long: DNA ligase (717 aa).

NAD(+) contacts are provided by residues 44–48 (DADYD), 93–94 (SL), and glutamate 127. Lysine 129 serves as the catalytic N6-AMP-lysine intermediate. 4 residues coordinate NAD(+): arginine 150, glutamate 186, lysine 302, and lysine 326. Zn(2+) is bound by residues cysteine 431, cysteine 434, cysteine 455, and cysteine 461. Residues 639–717 (STDSPVAGKT…EDEWLALIGG (79 aa)) enclose the BRCT domain.

This sequence belongs to the NAD-dependent DNA ligase family. LigA subfamily. Requires Mg(2+) as cofactor. It depends on Mn(2+) as a cofactor.

The enzyme catalyses NAD(+) + (deoxyribonucleotide)n-3'-hydroxyl + 5'-phospho-(deoxyribonucleotide)m = (deoxyribonucleotide)n+m + AMP + beta-nicotinamide D-nucleotide.. In terms of biological role, DNA ligase that catalyzes the formation of phosphodiester linkages between 5'-phosphoryl and 3'-hydroxyl groups in double-stranded DNA using NAD as a coenzyme and as the energy source for the reaction. It is essential for DNA replication and repair of damaged DNA. In Sinorhizobium fredii (strain NBRC 101917 / NGR234), this protein is DNA ligase.